The primary structure comprises 452 residues: UPF0210 protein Dred_1672 (452 aa).

This sequence belongs to the UPF0210 family. In terms of assembly, homodimer.

This Desulforamulus reducens (strain ATCC BAA-1160 / DSM 100696 / MI-1) (Desulfotomaculum reducens) protein is UPF0210 protein Dred_1672.